The chain runs to 712 residues: DNA ligase (712 aa).

The span at 1–22 shows a compositional bias: low complexity; the sequence is MSTQYDSDSSPAASNSGSADPA. Residues 1 to 23 form a disordered region; sequence MSTQYDSDSSPAASNSGSADPAL. NAD(+) is bound at residue 53-57; sequence DAEFD. The interval 69 to 93 is disordered; it reads SHPEAVTGPSPTTEVAPSPPESSPF. Residues 104–105 and glutamate 129 each bind NAD(+); that span reads SL. The active-site N6-AMP-lysine intermediate is lysine 131. NAD(+)-binding residues include arginine 152, glutamate 192, lysine 308, and lysine 332. Positions 426, 429, 445, and 451 each coordinate Zn(2+). A BRCT domain is found at 624-712; sequence IQADLLAGLS…GPGKGDAEED (89 aa).

It belongs to the NAD-dependent DNA ligase family. LigA subfamily. Mg(2+) serves as cofactor. Mn(2+) is required as a cofactor.

It catalyses the reaction NAD(+) + (deoxyribonucleotide)n-3'-hydroxyl + 5'-phospho-(deoxyribonucleotide)m = (deoxyribonucleotide)n+m + AMP + beta-nicotinamide D-nucleotide.. DNA ligase that catalyzes the formation of phosphodiester linkages between 5'-phosphoryl and 3'-hydroxyl groups in double-stranded DNA using NAD as a coenzyme and as the energy source for the reaction. It is essential for DNA replication and repair of damaged DNA. In Corynebacterium urealyticum (strain ATCC 43042 / DSM 7109), this protein is DNA ligase.